The primary structure comprises 461 residues: Zinc transporter 6 (461 aa).

The Cytoplasmic portion of the chain corresponds to methionine 1–lysine 33. The helical transmembrane segment at isoleucine 34–serine 54 threads the bilayer. Topologically, residues threonine 55–threonine 64 are extracellular. The helical transmembrane segment at tyrosine 65–leucine 85 threads the bilayer. At arginine 86–arginine 98 the chain is on the cytoplasmic side. The chain crosses the membrane as a helical span at residues leucine 99 to leucine 119. Over lysine 120–threonine 134 the chain is Extracellular. Residues glycine 135–isoleucine 155 form a helical membrane-spanning segment. Residues arginine 156–proline 200 lie on the Cytoplasmic side of the membrane. Residues phenylalanine 201 to isoleucine 221 traverse the membrane as a helical segment. At asparagine 222–asparagine 223 the chain is on the extracellular side. The helical transmembrane segment at tyrosine 224–tyrosine 244 threads the bilayer. Residues proline 245–proline 461 lie on the Cytoplasmic side of the membrane. The segment at asparagine 371 to proline 392 is disordered.

This sequence belongs to the cation diffusion facilitator (CDF) transporter (TC 2.A.4) family. SLC30A subfamily. In terms of assembly, heterodimer with SLC30A5; form a functional zinc ion transmembrane transporter. As to expression, expressed in brain; especially in cerebellum, hippocampus, parahippocampal gyrus, superior and middle temporal gyrus. Also expressed in B-cells, colon, eye, and lung. Lower expression was present in bone, brain, cervix, ear, heart, kidney, muscle, nerve, pancreas, prostate, skin, stomach, and testis.

It is found in the golgi apparatus. It localises to the trans-Golgi network membrane. In terms of biological role, has probably no intrinsic transporter activity but together with SLC30A5 forms a functional zinc ion:proton antiporter heterodimer, mediating zinc entry into the lumen of organelles along the secretory pathway. As part of that zinc ion:proton antiporter, contributes to zinc ion homeostasis within the early secretory pathway and regulates the activation and folding of enzymes like alkaline phosphatases and enzymes involved in phosphatidylinositol glycan anchor biosynthesis. This Homo sapiens (Human) protein is Zinc transporter 6.